Consider the following 60-residue polypeptide: Large ribosomal subunit protein uL30 (60 aa).

This sequence belongs to the universal ribosomal protein uL30 family. Part of the 50S ribosomal subunit.

This Azoarcus sp. (strain BH72) protein is Large ribosomal subunit protein uL30.